The sequence spans 177 residues: MALDELKSAIPDFAKDLKLNLGSVIGNSDLPQQQLWGTVLACAIASRSPKVLRELEPEAKANLSAEAYTAAKSAAAIMAMNNVFYRTRHLLSDPEYGTLRAGLRMNVIGNPGVEKVDFELWSLAVSAINGCGQCLDSHEQVLRKAGVDRETIQEAVKVASVIQAVGVTLDAEAVLAE.

Cys-131 serves as the catalytic Proton donor. Residues Cys-131 and Cys-134 are joined by a disulfide bond. Catalysis depends on Cys-134, which acts as the Cysteine sulfenic acid (-SOH) intermediate.

The protein belongs to the AhpD family. Homotrimer.

The catalysed reaction is N(6)-[(R)-dihydrolipoyl]-L-lysyl-[lipoyl-carrier protein] + a hydroperoxide = N(6)-[(R)-lipoyl]-L-lysyl-[lipoyl-carrier protein] + an alcohol + H2O. Antioxidant protein with alkyl hydroperoxidase activity. Required for the reduction of the AhpC active site cysteine residues and for the regeneration of the AhpC enzyme activity. The chain is Alkyl hydroperoxide reductase AhpD from Streptomyces griseus subsp. griseus (strain JCM 4626 / CBS 651.72 / NBRC 13350 / KCC S-0626 / ISP 5235).